The sequence spans 376 residues: Zinc transporter 7 (376 aa).

Topologically, residues 1-37 (MLPLSIKDDEYKPPKFNLFGKISGWFRSILSDKTSRN) are cytoplasmic. Residues 38-58 (LFFFLCLNLSFAFVELLYGIW) traverse the membrane as a helical segment. Residues 59-67 (SNCLGLISD) lie on the Lumenal side of the membrane. The helical transmembrane segment at 68-88 (SFHMFFDSTAILAGLAASVIS) threads the bilayer. The Cytoplasmic segment spans residues 89–102 (KWRDNDAFSYGYVR). Residues 103–123 (AEVLAGFVNGLFLIFTAFFIF) form a helical membrane-spanning segment. At 124–140 (SEGVERALAPPDVHHER) the chain is on the lumenal side. Residues 141 to 161 (LLLVSILGFVVNLIGIFVFKH) traverse the membrane as a helical segment. A his-rich loop region spans residues 161-218 (HGGHGHSHGSGHGHSHSLFNGALDQAHGHVDHCHSHEVKHGAAHSHDHAHGHGHFHSH). Residues 162-236 (GGHGHSHGSG…TGPSRQILQG (75 aa)) lie on the Cytoplasmic side of the membrane. Over residues 194 to 222 (HSHEVKHGAAHSHDHAHGHGHFHSHDGPS) the composition is skewed to basic and acidic residues. Residues 194–226 (HSHEVKHGAAHSHDHAHGHGHFHSHDGPSLKET) are disordered. Residues 237–257 (VFLHILADTLGSIGVIASAIM) traverse the membrane as a helical segment. Over 258–262 (MQNFG) the chain is Lumenal. A helical membrane pass occupies residues 263–283 (LMIADPICSILIAILIVVSVI). The Cytoplasmic segment spans residues 284–376 (PLLRESVGIL…LYVQIDFAAM (93 aa)).

The protein belongs to the cation diffusion facilitator (CDF) transporter (TC 2.A.4) family. SLC30A subfamily. As to quaternary structure, homooligomer. In terms of tissue distribution, highly expressed in megakaryocytes and other bone marrow cells and in the epithelium of the small intestine. Expressed in testis (in Leydig cells), adrenal gland (in adrenal medula, zona fasciculata and zona of reticularis), and pituitary gland (in somatotropic cells).

It is found in the golgi apparatus membrane. The protein resides in the cytoplasmic vesicle. The protein localises to the golgi apparatus. It localises to the trans-Golgi network. Its subcellular location is the sarcoplasmic reticulum. It is found in the mitochondrion. It carries out the reaction Zn(2+)(in) = Zn(2+)(out). Zinc ion transporter mediating zinc entry from the cytosol into the lumen of organelles along the secretory pathway. By contributing to zinc ion homeostasis within the early secretory pathway, regulates the activation and folding of enzymes like alkaline phosphatases. This chain is Zinc transporter 7, found in Homo sapiens (Human).